The chain runs to 306 residues: Protoheme IX farnesyltransferase (306 aa).

Helical transmembrane passes span 31–50 (VIELLLVTTAPVMILAQGGW), 55–77 (LILGVLVGGTLSAGSANAFNCYI), 104–124 (LVFAWIIGVASIIWLGVISNW), 125–145 (LAAALSLAAILFYVFVYTLWL), 168–188 (WAAVTGDISWAPVILFMIVFL), 218–235 (GRAAVGLQTILYSWATLA), 238–258 (LLLIPVAGMGLVYTLAALAGG), and 286–306 (ASISYLSLLFLAVGIDPLLPF).

This sequence belongs to the UbiA prenyltransferase family. Protoheme IX farnesyltransferase subfamily.

The protein localises to the cell membrane. The catalysed reaction is heme b + (2E,6E)-farnesyl diphosphate + H2O = Fe(II)-heme o + diphosphate. The protein operates within porphyrin-containing compound metabolism; heme O biosynthesis; heme O from protoheme: step 1/1. Converts heme B (protoheme IX) to heme O by substitution of the vinyl group on carbon 2 of heme B porphyrin ring with a hydroxyethyl farnesyl side group. In Clavibacter sepedonicus (Clavibacter michiganensis subsp. sepedonicus), this protein is Protoheme IX farnesyltransferase.